Here is a 504-residue protein sequence, read N- to C-terminus: uncharacterized protein (504 aa).

It to M.thermoautotrophicum MTH1137.

This is an uncharacterized protein from Methanocaldococcus jannaschii (strain ATCC 43067 / DSM 2661 / JAL-1 / JCM 10045 / NBRC 100440) (Methanococcus jannaschii).